Consider the following 330-residue polypeptide: MANRTVKEAKNVHGTNPQYLIEKIIRSRIYDSKYWKEQCFALTAELLVDKAMELRFVGGVYGGNIKPTQFLCLTLKMLQIQPEKDIVVEFIKNEEFKYVRALGAFYLRLTGAALDCYKYLEPLYIDNRKLRRQNRAGQFEIVYMDEYIDELLRNDRVCDIILPRIQKRSILEENNEIEPKVSVLDEDLDDELPSDEEKADETNRPKENSTAVRRPRRVRSKSRSRSRERERRSGQGNSARSRDYYDELEDYDRQRNRVRNRDTHNEDYDRRQNNGRHDRERERQDRDSIRERERDGDRDRRDRERERERDRGRHDQRERDSRGERDRRRY.

The interval Ser182 to Tyr330 is disordered. A compositionally biased stretch (acidic residues) spans Leu184–Ala199. Residues Arg213 to Ser224 show a composition bias toward basic residues. Residues Arg240–Tyr330 show a composition bias toward basic and acidic residues.

Belongs to the PRP38 family. As to quaternary structure, component of the spliceosome C complex. Interacts with Mfap1 (via C-terminus). In terms of tissue distribution, detected in all germal and follicle cells.

It is found in the nucleus. Required for pre-mRNA splicing. This Drosophila melanogaster (Fruit fly) protein is Pre-mRNA-splicing factor 38.